We begin with the raw amino-acid sequence, 189 residues long: Flavin prenyltransferase UbiX (189 aa).

Residues 11-13 (GAS), S37, 88-91 (SMRT), and R123 contribute to the FMN site. Y153 lines the dimethylallyl phosphate pocket.

The protein belongs to the UbiX/PAD1 family.

The catalysed reaction is dimethylallyl phosphate + FMNH2 = prenylated FMNH2 + phosphate. Functionally, flavin prenyltransferase that catalyzes the synthesis of the prenylated FMN cofactor (prenyl-FMN) for 4-hydroxy-3-polyprenylbenzoic acid decarboxylase UbiD. The prenyltransferase is metal-independent and links a dimethylallyl moiety from dimethylallyl monophosphate (DMAP) to the flavin N5 and C6 atoms of FMN. This is Flavin prenyltransferase UbiX from Neisseria meningitidis serogroup B (strain ATCC BAA-335 / MC58).